The primary structure comprises 235 residues: RING-H2 finger protein ATL17 (235 aa).

The chain crosses the membrane as a helical span at residues Met1 to Tyr21. The RING-type; atypical zinc-finger motif lies at Cys76 to Arg118. Residues Val143 to Lys167 are disordered.

Belongs to the RING-type zinc finger family. ATL subfamily.

It is found in the membrane. It catalyses the reaction S-ubiquitinyl-[E2 ubiquitin-conjugating enzyme]-L-cysteine + [acceptor protein]-L-lysine = [E2 ubiquitin-conjugating enzyme]-L-cysteine + N(6)-ubiquitinyl-[acceptor protein]-L-lysine.. The protein operates within protein modification; protein ubiquitination. May be involved in the early steps of the plant defense signaling pathway. The sequence is that of RING-H2 finger protein ATL17 (ATL17) from Arabidopsis thaliana (Mouse-ear cress).